The sequence spans 271 residues: Signal recognition particle receptor subunit beta (271 aa).

The helical transmembrane segment at 37–57 (LLSVVVAVLAVLLTLVFWKLI) threads the bilayer. GTP is bound by residues 71 to 79 (GLCDSGKTL) and 92 to 95 (TQTS). Residue S112 is modified to Phosphoserine. G120 provides a ligand contact to GTP. The residue at position 214 (T214) is a Phosphothreonine. Position 248 (A248) interacts with GTP.

Belongs to the SRP receptor beta subunit family. Heterodimer with SRPRA.

Its subcellular location is the endoplasmic reticulum membrane. Its function is as follows. Component of the signal recognition particle (SRP) complex receptor (SR). Ensures, in conjunction with the SRP complex, the correct targeting of the nascent secretory proteins to the endoplasmic reticulum membrane system. May mediate the membrane association of SR. The protein is Signal recognition particle receptor subunit beta (SRPRB) of Homo sapiens (Human).